The sequence spans 356 residues: Protein SEC13 homolog (356 aa).

6 WD repeats span residues 11-50, 54-95, 101-142, 149-205, 210-253, and 259-298; these read EHED…KALA, GHQG…DWTK, NHDS…GVWD, AHTI…WVEE, AHSD…SEWT, and TFDD…QWIR. The segment at 307–356 is disordered; sequence IQSKQPSHLPHSHSQQQQALQQHQQQAPSHPGPSSDSEHSSNLSNSQLSN. Residues 308 to 356 show a composition bias toward low complexity; sequence QSKQPSHLPHSHSQQQQALQQHQQQAPSHPGPSSDSEHSSNLSNSQLSN.

This sequence belongs to the WD repeat SEC13 family. In terms of assembly, probable component of the nuclear pore complex (NPC). Component of the GATOR complex consisting of mio, Nup44A/Seh1, Im11, Nplr3, Nplr2, Wdr24, Wdr59 and Sec13. Within the GATOR complex, probable component of the GATOR2 subcomplex which is likely composed of mio, Nup44A/Seh1, Wdr24, Wdr59 and Sec13. Interacts with msk. Interacts (preferentially when phosphorylated) with Mad. The GATOR2 complex associates with unmet in the absence of S-adenosyl-L-methionine; the mio-Wdr24-Nup44A subcomplex is essential and sufficient for this interaction while Wdr59 and Sec13 are dispensable. This association acts as a nutrient sensor to inhibit mTORC1 signaling in the absence of methionine. In terms of tissue distribution, salivary glands.

Its subcellular location is the nucleus envelope. It is found in the nucleus. The protein localises to the nucleoplasm. It localises to the cytoplasm. The protein resides in the cytoskeleton. Its subcellular location is the microtubule organizing center. It is found in the centrosome. The protein localises to the nuclear pore complex. It localises to the cytoplasmic vesicle. The protein resides in the COPII-coated vesicle membrane. Its subcellular location is the endoplasmic reticulum membrane. It is found in the lysosome membrane. Its function is as follows. Functions as a component of the nuclear pore complex (NPC) and the COPII coat. At the endoplasmic reticulum, SEC13 is involved in the biogenesis of COPII-coated vesicles. Recruited to transcriptionally active chromatin at the time of transcription initiation by RNA polymerase II. Required for proper expression of ecdysone-responsive genes such as Eip74EF and Eip75B during larval development. Required for reactivation of transcription after heat shock. Required for nuclear import of phosphorylated Mad via importin msk. Has no role in classical nuclear localization signal (cNLS)-dependent nuclear import via importin-beta. A component of the GATOR subcomplex GATOR2 which functions as an activator of the amino acid-sensing branch of the mTORC1 signaling pathway. The two GATOR subcomplexes, GATOR1 and GATOR2, regulate the mTORC1 pathway in order to mediate metabolic homeostasis, female gametogenesis and the response to amino acid limitation and complete starvation. GATOR2 activates the mTORC1 signaling pathway through the inhibition of the GATOR1 subcomplex, controlling the switch to cell proliferation and growth under nutrient replete conditions and during female oocyte development. The sequence is that of Protein SEC13 homolog from Drosophila melanogaster (Fruit fly).